A 243-amino-acid chain; its full sequence is Lipid II isoglutaminyl synthase (glutamine-hydrolyzing) subunit GatD (243 aa).

Residues 6–197 (IYHFMSDKLN…LHGPILPKNY (192 aa)) form the GATase cobBQ-type domain. C94 (nucleophile) is an active-site residue. R128 contributes to the substrate binding site. H189 is a catalytic residue.

The protein belongs to the CobB/CobQ family. GatD subfamily. In terms of assembly, forms a heterodimer with MurT.

It carries out the reaction beta-D-GlcNAc-(1-&gt;4)-Mur2Ac(oyl-L-Ala-gamma-D-Glu-L-Lys-D-Ala-D-Ala)-di-trans,octa-cis-undecaprenyl diphosphate + L-glutamine + ATP + H2O = beta-D-GlcNAc-(1-&gt;4)-Mur2Ac(oyl-L-Ala-D-isoglutaminyl-L-Lys-D-Ala-D-Ala)-di-trans,octa-cis-undecaprenyl diphosphate + L-glutamate + ADP + phosphate + H(+). The catalysed reaction is L-glutamine + H2O = L-glutamate + NH4(+). It functions in the pathway cell wall biogenesis; peptidoglycan biosynthesis. Functionally, the lipid II isoglutaminyl synthase complex catalyzes the formation of alpha-D-isoglutamine in the cell wall lipid II stem peptide. The GatD subunit catalyzes the hydrolysis of glutamine to glutamate and ammonia. The resulting ammonia molecule is channeled to the active site of MurT. This chain is Lipid II isoglutaminyl synthase (glutamine-hydrolyzing) subunit GatD, found in Staphylococcus aureus (strain N315).